The primary structure comprises 151 residues: Caveolin-3 (151 aa).

The Cytoplasmic segment spans residues 1 to 83; sequence MMTEEHTDLE…RLLSTLLGVP (83 aa). A Glycyl lysine isopeptide (Lys-Gly) (interchain with G-Cter in SUMO3) cross-link involves residue K38. The tract at residues 64–114 is required for interaction with DAG1; sequence TFTVSKYWCYRLLSTLLGVPLALLWGFLFACISFCHIWAVVPCIKSYLIEI. Positions 84–104 form an intramembrane region, helical; that stretch reads LALLWGFLFACISFCHIWAVV. The Cytoplasmic segment spans residues 105–151; sequence PCIKSYLIEIQCISHIYSLCIRTFCNPLFAALGQVCSNIKVVLRREG.

The protein belongs to the caveolin family. In terms of assembly, homooligomer. Interacts with DYSF. Interacts with DLG1 and KCNA5; forms a ternary complex. Interacts with DAG1 (via its C-terminal); the interaction prevents binding of DAG1 with DMD. Interacts with TRIM72. Interacts with MUSK; may regulate MUSK signaling. Interacts with POPDC1. Interacts with CAVIN1, CAVIN2 and CAVIN4. Sumoylation with SUMO3 by PIAS4 may reduce agonist-induced internalization and desensitization of adrenergic receptor ABRD2. In terms of tissue distribution, expressed predominantly in muscle.

It is found in the golgi apparatus membrane. It localises to the cell membrane. Its subcellular location is the membrane. The protein localises to the caveola. The protein resides in the sarcolemma. Functionally, may act as a scaffolding protein within caveolar membranes. Interacts directly with G-protein alpha subunits and can functionally regulate their activity. May also regulate voltage-gated potassium channels. Plays a role in the sarcolemma repair mechanism of both skeletal muscle and cardiomyocytes that permits rapid resealing of membranes disrupted by mechanical stress. Mediates the recruitment of CAVIN2 and CAVIN3 proteins to the caveolae. In Mus musculus (Mouse), this protein is Caveolin-3.